The following is a 140-amino-acid chain: MSEEFDESEIIFSDNYFPIRRREDGNEKENNRPVDFRENSERVWNKSSRRSKTTPLPSAVTAFSSSLPVNIPMRRYSTEEEYSDDDGGRKMIPPHLIVGRRMEGGQMAFSVCTGNGRTLKGRDLSRVRNSVLKLTGFLEA.

Positions 16 to 58 (YFPIRRREDGNEKENNRPVDFRENSERVWNKSSRRSKTTPLPS) are disordered. Basic and acidic residues predominate over residues 20-44 (RRREDGNEKENNRPVDFRENSERVW).

Belongs to the senescence regulator S40 family.

It localises to the cytoplasm. The polypeptide is Protein S40-1 (Arabidopsis thaliana (Mouse-ear cress)).